A 308-amino-acid polypeptide reads, in one-letter code: tRNA pseudouridine synthase B (308 aa).

Residue aspartate 49 is the Nucleophile of the active site.

This sequence belongs to the pseudouridine synthase TruB family. Type 1 subfamily.

It catalyses the reaction uridine(55) in tRNA = pseudouridine(55) in tRNA. Functionally, responsible for synthesis of pseudouridine from uracil-55 in the psi GC loop of transfer RNAs. This Nitrosococcus oceani (strain ATCC 19707 / BCRC 17464 / JCM 30415 / NCIMB 11848 / C-107) protein is tRNA pseudouridine synthase B.